A 425-amino-acid polypeptide reads, in one-letter code: Acyl-lipid (8-3)-desaturase (425 aa).

Residues 1–25 form a disordered region; that stretch reads MPPRDSYSYAAPPSAQLHEVDTPQE. Residues 18 to 93 enclose the Cytochrome b5 heme-binding domain; it reads HEVDTPQEHD…SRPVHKGYSP (76 aa). Heme is bound by residues histidine 47 and histidine 69. A helical membrane pass occupies residues 134-154; the sequence is VAGAALIWHGYTFAGIAMLGV. Positions 164-168 match the Histidine box-1 motif; sequence HEGGH. Residues 175–197 traverse the membrane as a helical segment; that stretch reads IAFDRAIQVACYGLGCGMSGAWW. The short motif at 201–206 is the Histidine box-2 element; the sequence is HNKHHA. 2 consecutive transmembrane segments (helical) span residues 241 to 261 and 297 to 317; these read WLSM…ALGW and GAGY…MYIF. The Histidine box-3 signature appears at 365-369; sequence QIEHH.

This sequence belongs to the fatty acid desaturase type 1 family. Fe(2+) is required as a cofactor.

Its subcellular location is the membrane. The enzyme catalyses an (8Z,11Z,14Z)-icosatrienoyl-containing glycerolipid + 2 Fe(II)-[cytochrome b5] + O2 + 2 H(+) = (5Z,8Z,11Z,14Z)-eicosatetraenoyl-containing glycerolipid + 2 Fe(III)-[cytochrome b5] + 2 H2O. The catalysed reaction is an (8Z,11Z,14Z,17Z)-eicosatetraenoyl-containing glycerolipid + 2 Fe(II)-[cytochrome b5] + O2 + 2 H(+) = a (5Z,8Z,11Z,14Z,17Z)-eicosapentaenoyl-containing glycerolipid + 2 Fe(III)-[cytochrome b5] + 2 H2O. Fatty acid desaturase that introduces a cis double bond at the 5-position in 20-carbon polyunsaturated fatty acids incorporated in a glycerolipid that contain a Delta(8) double bond. The protein is Acyl-lipid (8-3)-desaturase of Rebecca salina (Marine microalga).